A 341-amino-acid chain; its full sequence is MATIKDVAKRANVSTTTVSHVINKTRFVAEETRNAVWAAIKELHYSPSAVARSLKVNHTKSIGLLATSSEAAYFAEIIEAVEKNCFQKGYTLILGNAWNNLEKQRAYLSMMAQKRVDGLLVMCSEYPEPLLTMLEEYRHIPMVVMDWGEAKADFTDAVIDNAFEGGYMAGRYLIERGHRDIGVIPGPLERNTGAGRLAGFMKAMEEALIKVPENWIVQGDFEPESGYRAMQQILAQTHRPTAVFCGGDIMAMGALCAADEMGLRVPQDISVIGYDNVRNARYFTPALTTIHQPKDSLGETAFNMLLDRIVNKREEPQSIEVHPRLIERRSVADGPFRDYRR.

The 55-residue stretch at 2 to 56 (ATIKDVAKRANVSTTTVSHVINKTRFVAEETRNAVWAAIKELHYSPSAVARSLKV) folds into the HTH lacI-type domain. The H-T-H motif DNA-binding region spans 4-23 (IKDVAKRANVSTTTVSHVIN). The DNA-binding element occupies 48 to 56 (SAVARSLKV). Hypoxanthine contacts are provided by Tyr73, Arg190, Thr192, Phe221, and Asp275.

As to quaternary structure, homodimer.

Its pathway is purine metabolism; purine nucleotide biosynthesis [regulation]. Its function is as follows. Is the main repressor of the genes involved in the de novo synthesis of purine nucleotides, regulating purB, purC, purEK, purF, purHD, purL, purMN and guaBA expression. PurR is allosterically activated to bind its cognate DNA by binding the purine corepressors, hypoxanthine or guanine, thereby effecting transcription repression. This chain is HTH-type transcriptional repressor PurR, found in Escherichia fergusonii (strain ATCC 35469 / DSM 13698 / CCUG 18766 / IAM 14443 / JCM 21226 / LMG 7866 / NBRC 102419 / NCTC 12128 / CDC 0568-73).